The chain runs to 84 residues: Large ribosomal subunit protein bL27 (84 aa).

Belongs to the bacterial ribosomal protein bL27 family.

This Buchnera aphidicola subsp. Schizaphis graminum (strain Sg) protein is Large ribosomal subunit protein bL27.